The following is a 96-amino-acid chain: Glycine-rich protein DC7.1 (96 aa).

The signal sequence occupies residues 1–25; it reads MGSKIFLLLGLSIAFALLISSEVAA. The interval 29-66 is disordered; the sequence is SETTTEGASLDGGHHGGGGGGHYSGGGGHGGSHHGGGG. 2 repeat units span residues 42–50 and 61–67. The 2 approximate repeats of H-H-G(4,6)-H stretch occupies residues 42–67; the sequence is HHGGGGGGHYSGGGGHGGSHHGGGGH. The span at 43–66 shows a compositional bias: gly residues; the sequence is HGGGGGGHYSGGGGHGGSHHGGGG.

It belongs to the GRP family.

In terms of biological role, may be connected with the initiation of embryogenesis or with the metabolic changes produced by the removal of auxins. This chain is Glycine-rich protein DC7.1, found in Daucus carota (Wild carrot).